Reading from the N-terminus, the 816-residue chain is Transducer protein Htr18 (816 aa).

Transmembrane regions (helical) follow at residues 21 to 41 and 282 to 302; these read VVIV…TQAV and NIVV…LVIG. The 54-residue stretch at 303–356 folds into the HAMP 1 domain; that stretch reads RDALTALTDMSDRAEAIAAGDIDTAIEETTRIDEVGDLRRSFRDIQEYLQTVAG. Residues 399-425 form a disordered region; the sequence is DAQETAEQSRKEAEQSREEAEALAAAL. Basic and acidic residues predominate over residues 405–418; it reads EQSRKEAEQSREEA. The HAMP 2 domain maps to 423 to 476; sequence AALESQAQDIRETVEHAADGDLTQRLETDTDHESMAAIATALNSLLEELEGTIH. The 237-residue stretch at 495–731 folds into the Methyl-accepting transducer domain; that stretch reads SAEEVKRASG…EVVTMVDEVG (237 aa). Residues 790–816 form a disordered region; it reads GGAENTTGAFVRSASTDHSRDATHHDT. Over residues 793–803 the composition is skewed to polar residues; it reads ENTTGAFVRSA. Residues 804 to 816 show a composition bias toward basic and acidic residues; that stretch reads STDHSRDATHHDT.

This sequence belongs to the methyl-accepting chemotaxis (MCP) protein family. In terms of processing, methylated by CheR.

It is found in the cell membrane. Its function is as follows. Potentially involved in chemo- or phototactic signal transduction. The polypeptide is Transducer protein Htr18 (htr18) (Halobacterium salinarum (strain ATCC 29341 / DSM 671 / R1)).